A 39-amino-acid polypeptide reads, in one-letter code: Photosystem II reaction center protein J (39 aa).

Residues 7–27 (IPLWIVAVVAGMGVIAVVGIF) traverse the membrane as a helical segment.

Belongs to the PsbJ family. PSII is composed of 1 copy each of membrane proteins PsbA, PsbB, PsbC, PsbD, PsbE, PsbF, PsbH, PsbI, PsbJ, PsbK, PsbL, PsbM, PsbT, PsbX, PsbY, PsbZ, Psb30/Ycf12, peripheral proteins PsbO, CyanoQ (PsbQ), PsbU, PsbV and a large number of cofactors. It forms dimeric complexes.

The protein localises to the cellular thylakoid membrane. Its function is as follows. This protein is a component of the reaction center of photosystem II. One of the components of the core complex of photosystem II (PSII). PSII is a light-driven water:plastoquinone oxidoreductase that uses light energy to abstract electrons from H(2)O, generating O(2) and a proton gradient subsequently used for ATP formation. It consists of a core antenna complex that captures photons, and an electron transfer chain that converts photonic excitation into a charge separation. This is Photosystem II reaction center protein J from Picosynechococcus sp. (strain ATCC 27264 / PCC 7002 / PR-6) (Agmenellum quadruplicatum).